Here is a 258-residue protein sequence, read N- to C-terminus: Axonemal dynein light intermediate polypeptide 1 (258 aa).

Disordered stretches follow at residues 1–60 (MIPP…CVPD) and 202–231 (DLERQVNEQKAKCEATEKRESERRQVEEKK). Residues 176–255 (MRKALQAEQG…LKAQLEGIIA (80 aa)) adopt a coiled-coil conformation.

It belongs to the inner dynein arm light chain family. Interacts with CFAP45. Interacts with DYNC1H1. As to expression, predominantly expressed in the testis, also detected at lower levels in several tissues expressing cilia. Strongly expressed in elongating spermatid cells (at protein level).

It is found in the cell projection. Its subcellular location is the cilium. The protein localises to the flagellum. The protein resides in the dynein axonemal particle. It localises to the cytoplasm. Involved in sperm flagellum assembly. In Mus musculus (Mouse), this protein is Axonemal dynein light intermediate polypeptide 1.